The primary structure comprises 1157 residues: Folliculin-interacting protein 1 (1157 aa).

The region spanning 37-467 (FDPSQIRLIV…TVMPNGQPPI (431 aa)) is the uDENN FNIP1/2-type domain. 4 disordered regions span residues 92-120 (PGGD…CPKY), 616-665 (SQQE…TKVE), 769-796 (SPPT…NRDC), and 904-955 (VPHG…NYYG). Positions 95 to 111 (DSSSSLDSSINSSSSFS) are enriched in low complexity. In terms of domain architecture, cDENN FNIP1/2-type spans 475–1083 (SSQSVDMLAK…VSNLLHSTLQ (609 aa)). The segment covering 651–664 (ADGHQPRTCQDTKV) has biased composition (basic and acidic residues). The segment covering 904 to 916 (VPHGDRENAEKKV) has biased composition (basic and acidic residues). The 56-residue stretch at 1093 to 1148 (FCVMHLEDRLQELYFKSKMLSEYLKGQMRVHVKELGVVLGIESSDLPLLAAVASTH) folds into the dDENN FNIP1/2-type domain.

This sequence belongs to the FNIP family. In terms of assembly, homodimer and homomultimer. Heterodimer and heteromultimer with FNIP2. Component of the lysosomal folliculin complex (LFC).

Its subcellular location is the lysosome membrane. The protein resides in the cytoplasm. It is found in the cytosol. Binding partner of the GTPase-activating protein FLCN: involved in the cellular response to amino acid availability by regulating the non-canonical mTORC1 signaling cascade controlling the MiT/TFE factors TFEB and TFE3. Required to promote FLCN recruitment to lysosomes and interaction with Rag GTPases, leading to activation of the non-canonical mTORC1 signaling. In low-amino acid conditions, component of the lysosomal folliculin complex (LFC) on the membrane of lysosomes, which inhibits the GTPase-activating activity of FLCN, thereby inactivating mTORC1 and promoting nuclear translocation of TFEB and TFE3. Upon amino acid restimulation, disassembly of the LFC complex liberates the GTPase-activating activity of FLCN, leading to activation of mTORC1 and subsequent inactivation of TFEB and TFE3. In addition to its role in mTORC1 signaling, also acts as a co-chaperone of HSP90AA1/Hsp90: inhibits the ATPase activity of HSP90AA1/Hsp90, leading to activate both kinase and non-kinase client proteins of HSP90AA1/Hsp90. Acts as a scaffold to load client protein FLCN onto HSP90AA1/Hsp90. In Gallus gallus (Chicken), this protein is Folliculin-interacting protein 1.